The chain runs to 250 residues: Copper homeostasis protein cutC homolog (250 aa).

The protein belongs to the CutC family.

Involved in copper homeostasis. Affects body morphology and length, egg laying and brood size. This Caenorhabditis elegans protein is Copper homeostasis protein cutC homolog (cutc-1).